We begin with the raw amino-acid sequence, 309 residues long: MSNPSAPPPYEDHNPLYPGSPPPGGYGQPSVLPGGYPAYPAYPQPGYGHPAGYPQPVPPVHPMPMNYGHDYNEEERAGSDSFRPGEWDDRKVRHSFIQKVYCIISVQLLITVAIIAIFTFVEPVGKYVRNNVAVYYVSYAVFLVTYLTLACCQGPRRRFPWDIILLTIFTLALGFVTGTISSMYENKAVIIAMIITAVVSISVTIFCFQTKVDFTSCTGLFCVLGIVLMVTGIVTSIVLIFKYIYWLHMVYAALGAICFTLFLAYDTQLVLGNRKHTISPEDYITGALQIYTDIVYIFTFVLQLVGSRD.

Disordered regions lie at residues 1-31 (MSNP…QPSV) and 64-84 (PMNY…SFRP). The span at 70-84 (DYNEEERAGSDSFRP) shows a compositional bias: basic and acidic residues. A phosphoserine mark is found at S79 and S81. The next 7 membrane-spanning stretches (helical) occupy residues 101 to 121 (YCII…FTFV), 132 to 152 (VAVY…LACC), 163 to 183 (IILL…ISSM), 188 to 208 (AVII…IFCF), 221 to 241 (FCVL…VLIF), 244 to 264 (IYWL…LFLA), and 286 to 306 (GALQ…QLVG).

Belongs to the BI1 family. LFG subfamily. In terms of tissue distribution, expressed in most tissues except spleen, thymus and testis.

Its subcellular location is the membrane. The protein localises to the lysosome membrane. It localises to the endosome membrane. In terms of biological role, negatively regulates aortic matrix metalloproteinase-9 (MMP9) production and may play a protective role in vascular remodeling. This chain is Protein lifeguard 3 (Tmbim1), found in Mus musculus (Mouse).